Consider the following 331-residue polypeptide: Adenosine deaminase (331 aa).

Residues His12 and His14 each coordinate Zn(2+). His14, Asp16, and Gly170 together coordinate substrate. A Zn(2+)-binding site is contributed by His197. The active-site Proton donor is the Glu200. Position 278 (Asp278) interacts with Zn(2+).

The protein belongs to the metallo-dependent hydrolases superfamily. Adenosine and AMP deaminases family. Adenosine deaminase subfamily. Requires Zn(2+) as cofactor.

It catalyses the reaction adenosine + H2O + H(+) = inosine + NH4(+). The catalysed reaction is 2'-deoxyadenosine + H2O + H(+) = 2'-deoxyinosine + NH4(+). Its function is as follows. Catalyzes the hydrolytic deamination of adenosine and 2-deoxyadenosine. This is Adenosine deaminase from Vibrio vulnificus (strain CMCP6).